Reading from the N-terminus, the 100-residue chain is Small ribosomal subunit protein uS14 (100 aa).

It belongs to the universal ribosomal protein uS14 family. Part of the 30S ribosomal subunit. Contacts proteins S3 and S10.

In terms of biological role, binds 16S rRNA, required for the assembly of 30S particles and may also be responsible for determining the conformation of the 16S rRNA at the A site. In Prochlorococcus marinus (strain AS9601), this protein is Small ribosomal subunit protein uS14.